Consider the following 42-residue polypeptide: Cytochrome b6-f complex subunit 7 (42 aa).

The helical transmembrane segment at 15–35 (IVTAAVTCIFMVLFGLSLGFA) threads the bilayer.

The protein belongs to the PetM family. In terms of assembly, the 4 large subunits of the cytochrome b6-f complex are cytochrome b6, subunit IV (17 kDa polypeptide, PetD), cytochrome f and the Rieske protein, while the 4 small subunits are PetG, PetL, PetM and PetN. The complex functions as a dimer.

It localises to the plastid. The protein resides in the chloroplast thylakoid membrane. Component of the cytochrome b6-f complex, which mediates electron transfer between photosystem II (PSII) and photosystem I (PSI), cyclic electron flow around PSI, and state transitions. This chain is Cytochrome b6-f complex subunit 7, found in Trieres chinensis (Marine centric diatom).